We begin with the raw amino-acid sequence, 173 residues long: tRNA-specific adenosine deaminase (173 aa).

In terms of domain architecture, CMP/dCMP-type deaminase spans 9–121 (EFDEKMMRYA…DYKTGAIGSR (113 aa)). A Zn(2+)-binding site is contributed by His-61. Glu-63 serves as the catalytic Proton donor. Positions 91 and 94 each coordinate Zn(2+).

Belongs to the cytidine and deoxycytidylate deaminase family. As to quaternary structure, homodimer. Zn(2+) is required as a cofactor.

The catalysed reaction is adenosine(34) in tRNA + H2O + H(+) = inosine(34) in tRNA + NH4(+). In terms of biological role, catalyzes the deamination of adenosine to inosine at the wobble position 34 of tRNA(Arg2). The polypeptide is tRNA-specific adenosine deaminase (Haemophilus influenzae (strain ATCC 51907 / DSM 11121 / KW20 / Rd)).